The sequence spans 143 residues: uncharacterized protein (143 aa).

4 helical membrane passes run Leu7–Val29, Phe52–Leu74, Leu87–Gly105, and Trp120–Gly142.

The protein resides in the cell membrane. This is an uncharacterized protein from Aquifex aeolicus (strain VF5).